The sequence spans 134 residues: L-ectoine synthase (134 aa).

The protein belongs to the ectoine synthase family.

It catalyses the reaction (2S)-4-acetamido-2-aminobutanoate = L-ectoine + H2O. It participates in amine and polyamine biosynthesis; ectoine biosynthesis; L-ectoine from L-aspartate 4-semialdehyde: step 3/3. In terms of biological role, catalyzes the circularization of gamma-N-acetyl-alpha,gamma-diaminobutyric acid (ADABA) to ectoine (1,4,5,6-tetrahydro-2-methyl-4-pyrimidine carboxylic acid), which is an excellent osmoprotectant. In Sporosarcina pasteurii (Bacillus pasteurii), this protein is L-ectoine synthase (ectC).